A 114-amino-acid chain; its full sequence is MSPRKTYILKLYVAGNTPNSMRALKTLHEILENEFKGVYALKVIDILKSPQLAEEDKILATPTLTKILPPPVRRIIGDLSDRERVLIGLDLLYEELSGNEFLSSIASPNSDEDN.

It belongs to the KaiB family. In terms of assembly, may undergo a major conformational rearrangment; in the free state forms homooligomers. When bound to KaiC switches to a monomeric thioredoxin-fold (KaiB(fs)). The active oscillator complex is probably KaiC(6):KaiB(6).

Component of the KaiBC clock protein complex, which constitutes the main circadian regulator in cyanobacteria; it may modify the ATPase activity of KaiC. Its function is as follows. May be a metamorphic protein which reversibly switches between an inactive tetrameric fold and a rare, thioredoxin-like monomeric fold (KaiB(fs)). KaiB(fs) binds phospho-KaiC, and perhaps clock output effectors. The protein is Circadian clock oscillator protein KaiB of Prochlorococcus marinus (strain MIT 9211).